A 393-amino-acid chain; its full sequence is Eukaryotic translation initiation factor 5 (393 aa).

28-35 contributes to the GTP binding site; it reads GKGNGIKT. Disordered stretches follow at residues 144 to 179 and 217 to 247; these read KAVS…DEED and EPQS…SISS. The 163-residue stretch at 223-385 folds into the W2 domain; the sequence is EEQDEDDEQE…ETAEEEEEDE (163 aa). Residues 224 to 233 are compositionally biased toward acidic residues; that stretch reads EQDEDDEQEE.

It belongs to the eIF-2-beta/eIF-5 family.

Functionally, catalyzes the hydrolysis of GTP bound to the 40S ribosomal initiation complex (40S.mRNA.Met-tRNA[F].eIF-2.GTP) with the subsequent joining of a 60S ribosomal subunit resulting in the release of eIF-2 and the guanine nucleotide. The subsequent joining of a 60S ribosomal subunit results in the formation of a functional 80S initiation complex (80S.mRNA.Met-tRNA[F]). In Dictyostelium discoideum (Social amoeba), this protein is Eukaryotic translation initiation factor 5 (eif5).